The following is a 397-amino-acid chain: Gastric triacylglycerol lipase (397 aa).

An N-terminal signal peptide occupies residues 1-19 (MWWLLVTVCFIHMSGNAFC). A glycan (N-linked (GlcNAc...) asparagine) is linked at asparagine 33. The region spanning 77–376 (PVVFLQHGLL…PNYNHLDFIW (300 aa)) is the AB hydrolase-1 domain. Serine 171 acts as the Nucleophile in catalysis. Cysteine 245 and cysteine 254 are oxidised to a cystine. N-linked (GlcNAc...) asparagine glycans are attached at residues asparagine 270 and asparagine 326. Residues aspartate 342 and histidine 371 each act as charge relay system in the active site.

The protein belongs to the AB hydrolase superfamily. Lipase family.

The protein localises to the secreted. It carries out the reaction a triacylglycerol + H2O = a diacylglycerol + a fatty acid + H(+). The catalysed reaction is 1,2,3-tri-(9Z-octadecenoyl)-glycerol + H2O = 1,2-di-(9Z-octadecenoyl)-sn-glycerol + (9Z)-octadecenoate + H(+). The enzyme catalyses 1,2,3-trioctanoylglycerol + H2O = 1,2-dioctanoyl-sn-glycerol + octanoate + H(+). With respect to regulation, inhibited by diethylp-nitrophenyl phosphate but not inhibited by thiol reagents 5,5'-dithiobis(2-nitrobenzoic acid) or 4,4'-dithiopyridine. Catalyzes the hydrolysis of triacylglycerols to yield free fatty acids, diacylglycerol, monoacylglycerol, and glycerol. Shows a preferential hydrolysis at the sn-3 position of triacylglycerol. This is Gastric triacylglycerol lipase (LIPF) from Bos taurus (Bovine).